A 75-amino-acid chain; its full sequence is UPF0512 protein C (75 aa).

Belongs to the UPF0512 family.

The protein is UPF0512 protein C of Dictyostelium discoideum (Social amoeba).